We begin with the raw amino-acid sequence, 257 residues long: MQKVTIQEAEHLLQEIMSEEDDRFQILIKDERKGVQKLISKWYKQKELAQKEKEKFLEMSKYENALREKGLTYIAGIDEVGRGPLAGPVVTAAVVLPEDFYIPGLNDSKKLSEAKRERFYDEIKAQAIAIGVGIVSPQVIDEINIYQATKQAMLDAVANLSCTPQYLLIDAMKLPTPIPQTSIIKGDAKSISISAASIIAKVTRDRMMKELGEKYPAYGFEQHMGYGTKQHLEAIEAHGILEEHRKSFAPIKDMIQK.

The region spanning 72–257 (TYIAGIDEVG…FAPIKDMIQK (186 aa)) is the RNase H type-2 domain. Positions 78, 79, and 170 each coordinate a divalent metal cation.

Belongs to the RNase HII family. Mn(2+) is required as a cofactor. The cofactor is Mg(2+).

The protein localises to the cytoplasm. The catalysed reaction is Endonucleolytic cleavage to 5'-phosphomonoester.. Functionally, endonuclease that specifically degrades the RNA of RNA-DNA hybrids. This Bacillus cereus (strain ATCC 10987 / NRS 248) protein is Ribonuclease HII.